Reading from the N-terminus, the 425-residue chain is Serine--tRNA ligase 1 (425 aa).

Position 230 to 232 (230 to 232 (TSE)) interacts with L-serine. ATP-binding positions include 261 to 263 (RRE) and valine 277. Glutamate 284 serves as a coordination point for L-serine. 348–351 (ELTS) is an ATP binding site. Residue threonine 382 coordinates L-serine.

It belongs to the class-II aminoacyl-tRNA synthetase family. Type-1 seryl-tRNA synthetase subfamily. As to quaternary structure, homodimer. The tRNA molecule binds across the dimer.

The protein resides in the cytoplasm. The enzyme catalyses tRNA(Ser) + L-serine + ATP = L-seryl-tRNA(Ser) + AMP + diphosphate + H(+). The catalysed reaction is tRNA(Sec) + L-serine + ATP = L-seryl-tRNA(Sec) + AMP + diphosphate + H(+). Its pathway is aminoacyl-tRNA biosynthesis; selenocysteinyl-tRNA(Sec) biosynthesis; L-seryl-tRNA(Sec) from L-serine and tRNA(Sec): step 1/1. Catalyzes the attachment of serine to tRNA(Ser). Is also able to aminoacylate tRNA(Sec) with serine, to form the misacylated tRNA L-seryl-tRNA(Sec), which will be further converted into selenocysteinyl-tRNA(Sec). This Streptomyces avermitilis (strain ATCC 31267 / DSM 46492 / JCM 5070 / NBRC 14893 / NCIMB 12804 / NRRL 8165 / MA-4680) protein is Serine--tRNA ligase 1.